A 125-amino-acid chain; its full sequence is MIRTLVHAKIHRATVTGADLNYVGSITIDEDLLEAAGIWPFERVQVVDVNNGARLETYAIVGERGSGTIQLNGAAAHLVNVGDLVIIMAYAQVDAKPEEWEPTVVFVNEQNAITEVKALLPVGGR.

Catalysis depends on Ser-25, which acts as the Schiff-base intermediate with substrate; via pyruvic acid. Pyruvic acid (Ser) is present on Ser-25. Substrate is bound at residue Thr-57. Residue Tyr-58 is the Proton donor of the active site. 73–75 contacts substrate; that stretch reads GAA.

It belongs to the PanD family. As to quaternary structure, heterooctamer of four alpha and four beta subunits. The cofactor is pyruvate. Is synthesized initially as an inactive proenzyme, which is activated by self-cleavage at a specific serine bond to produce a beta-subunit with a hydroxyl group at its C-terminus and an alpha-subunit with a pyruvoyl group at its N-terminus.

It localises to the cytoplasm. The enzyme catalyses L-aspartate + H(+) = beta-alanine + CO2. It participates in cofactor biosynthesis; (R)-pantothenate biosynthesis; beta-alanine from L-aspartate: step 1/1. Its function is as follows. Catalyzes the pyruvoyl-dependent decarboxylation of aspartate to produce beta-alanine. This Herpetosiphon aurantiacus (strain ATCC 23779 / DSM 785 / 114-95) protein is Aspartate 1-decarboxylase.